Here is a 130-residue protein sequence, read N- to C-terminus: Ornithine decarboxylase antizyme (130 aa).

Positions 1-14 are enriched in basic and acidic residues; that stretch reads SDVPVHHRTDHDRA. The disordered stretch occupies residues 1-56; that stretch reads SDVPVHHRTDHDRASLLTGSSRKSSVDSAGGSLFEASSRASSPSSSSSSECSDTES. Polar residues predominate over residues 17-27; the sequence is LTGSSRKSSVD. Residues 32 to 51 are compositionally biased toward low complexity; sequence SLFEASSRASSPSSSSSSEC.

This sequence belongs to the ODC antizyme family. Interacts with ODC1 and thereby sterically blocks ODC homodimerization.

Its function is as follows. Ornithine decarboxylase (ODC) antizyme protein that negatively regulates ODC activity and intracellular polyamine biosynthesis and uptake in response to increased intracellular polyamine levels. Binds to ODC monomers, inhibiting the assembly of the functional ODC homodimer, and targets the monomers for ubiquitin-independent proteolytic destruction by the 26S proteasome. The protein is Ornithine decarboxylase antizyme (Oda) of Drosophila virilis (Fruit fly).